Consider the following 739-residue polypeptide: Trehalose phosphorylase (739 aa).

Positions 1–26 are excised as a propeptide; the sequence is MSTPHHQFESKSSTAIRRRLSSSVSS. The segment at 1-28 is disordered; the sequence is MSTPHHQFESKSSTAIRRRLSSSVSSKQ.

It belongs to the glycosyltransferase group 1 family. Glycosyltransferase 4 subfamily. As to quaternary structure, homodimer.

The enzyme catalyses alpha,alpha-trehalose + phosphate = alpha-D-glucose + alpha-D-glucose 1-phosphate. Functionally, reversibly catalyzes the synthesis and degradation of trehalose from glucose and alpha-D-glucose 1-phosphate. The equilibrium lies in the direction of trehalose synthesis. The sequence is that of Trehalose phosphorylase from Pleurotus pulmonarius (Indian oyster mushroom).